A 598-amino-acid chain; its full sequence is Elongation factor 4 (598 aa).

A tr-type G domain is found at 2 to 184 (DHIRNFSIIA…AIVKRVPPPR (183 aa)). GTP contacts are provided by residues 14–19 (DHGKST) and 131–134 (NKID).

The protein belongs to the TRAFAC class translation factor GTPase superfamily. Classic translation factor GTPase family. LepA subfamily.

Its subcellular location is the cell inner membrane. The catalysed reaction is GTP + H2O = GDP + phosphate + H(+). Functionally, required for accurate and efficient protein synthesis under certain stress conditions. May act as a fidelity factor of the translation reaction, by catalyzing a one-codon backward translocation of tRNAs on improperly translocated ribosomes. Back-translocation proceeds from a post-translocation (POST) complex to a pre-translocation (PRE) complex, thus giving elongation factor G a second chance to translocate the tRNAs correctly. Binds to ribosomes in a GTP-dependent manner. The protein is Elongation factor 4 of Syntrophus aciditrophicus (strain SB).